The sequence spans 805 residues: Sucrose synthase 1 (805 aa).

The segment at methionine 274–threonine 751 is GT-B glycosyltransferase.

It belongs to the glycosyltransferase 1 family. Plant sucrose synthase subfamily.

It carries out the reaction an NDP-alpha-D-glucose + D-fructose = a ribonucleoside 5'-diphosphate + sucrose + H(+). In terms of biological role, sucrose-cleaving enzyme that provides UDP-glucose and fructose for various metabolic pathways. This is Sucrose synthase 1 from Tulipa gesneriana (Garden tulip).